We begin with the raw amino-acid sequence, 111 residues long: uncharacterized protein (111 aa).

Residues 20 to 39 (PVDTTGLIFFAVFASSFVLY) traverse the membrane as a helical segment.

The protein localises to the membrane. This is an uncharacterized protein from Saccharomyces cerevisiae (strain ATCC 204508 / S288c) (Baker's yeast).